Reading from the N-terminus, the 212-residue chain is Outer-membrane lipoprotein carrier protein (212 aa).

The first 25 residues, 1-25 (MRKRILVSACAALAVFAAHMPTALA), serve as a signal peptide directing secretion.

Belongs to the LolA family. Monomer.

Its subcellular location is the periplasm. In terms of biological role, participates in the translocation of lipoproteins from the inner membrane to the outer membrane. Only forms a complex with a lipoprotein if the residue after the N-terminal Cys is not an aspartate (The Asp acts as a targeting signal to indicate that the lipoprotein should stay in the inner membrane). The protein is Outer-membrane lipoprotein carrier protein of Cupriavidus pinatubonensis (strain JMP 134 / LMG 1197) (Cupriavidus necator (strain JMP 134)).